A 503-amino-acid chain; its full sequence is MEVRKALTCVFLTVFLCSGDAQDSVTDSVLNCCEGDVLFLLDSSGSVASYEFSRMVDFLSELLLPFSLGPDHVRVGLLQVGTEPHLEFGFDAYSSQQGLQAALERTKQLKGDTNTVEALLMARAQVLRVGVPGGARPDLPRVLVWLTDGVDPGNVQEPMARLRDEGVAVLVVSTGHGNYQVLREVVSPPTEEHLFFVDIDDISIIGEDLRNSIIEIIRAERLQVKSVSSTSAQLEWRPVLSGSGSGYYDIKFGPMRTGQIPGVPGGASTDPGSFQRITRPADSSSAQLTGLRPDTTYTVTLTPKNNQQVLNTLQTSFTTQTVNPPEPQIQLLSSLSVSESSSNSVRVSWAPLLPRLIQEYQLEYSALPSGPLRVLRVSNTHNSTVITDLQPDTQYLLTVSAKQTSGKERAMTVKVCTQEVLPALSDLQLSSVGDETVQLRWKGSFDGLRGYWVTWERGHSQRSTLYLPPNRLSTTLNHVPSRARVCVSPVYRTARGEGLCCTA.

Positions 1-21 are cleaved as a signal peptide; sequence MEVRKALTCVFLTVFLCSGDA. The VWFA domain maps to 36 to 213; sequence DVLFLLDSSG…IIGEDLRNSI (178 aa). Fibronectin type-III domains are found at residues 218-324 and 331-423; these read RAER…TVNP and LLSS…VLPA.

As to quaternary structure, homodimer or homomultimer; disulfide-linked.

The protein resides in the secreted. It is found in the extracellular space. It localises to the extracellular matrix. The protein localises to the basement membrane. Functionally, promotes matrix assembly. Involved in the organization of skeletal muscles and in the formation of neuromuscular junctions. In Danio rerio (Zebrafish), this protein is von Willebrand factor A domain-containing protein 1.